Consider the following 754-residue polypeptide: 5-methyltetrahydropteroyltriglutamate--homocysteine methyltransferase (754 aa).

Residues Arg15–Lys18 and Lys114 contribute to the 5-methyltetrahydropteroyltri-L-glutamate site. Residues Ile430–Ser432 and Glu483 contribute to the L-homocysteine site. Residues Ile430–Ser432 and Glu483 contribute to the L-methionine site. Residues Arg514–Cys515 and Trp560 each bind 5-methyltetrahydropteroyltri-L-glutamate. Asp598 provides a ligand contact to L-homocysteine. Residue Asp598 participates in L-methionine binding. Glu604 contributes to the 5-methyltetrahydropteroyltri-L-glutamate binding site. Residues His641, Cys643, and Glu665 each coordinate Zn(2+). His694 (proton donor) is an active-site residue. Cys726 is a binding site for Zn(2+).

Belongs to the vitamin-B12 independent methionine synthase family. Zn(2+) serves as cofactor.

It catalyses the reaction 5-methyltetrahydropteroyltri-L-glutamate + L-homocysteine = tetrahydropteroyltri-L-glutamate + L-methionine. The protein operates within amino-acid biosynthesis; L-methionine biosynthesis via de novo pathway; L-methionine from L-homocysteine (MetE route): step 1/1. Functionally, catalyzes the transfer of a methyl group from 5-methyltetrahydrofolate to homocysteine resulting in methionine formation. This is 5-methyltetrahydropteroyltriglutamate--homocysteine methyltransferase from Campylobacter jejuni (strain RM1221).